A 125-amino-acid chain; its full sequence is Holo-[acyl-carrier-protein] synthase (125 aa).

Positions 8 and 56 each coordinate Mg(2+).

Belongs to the P-Pant transferase superfamily. AcpS family. Mg(2+) is required as a cofactor.

It localises to the cytoplasm. The catalysed reaction is apo-[ACP] + CoA = holo-[ACP] + adenosine 3',5'-bisphosphate + H(+). Its function is as follows. Transfers the 4'-phosphopantetheine moiety from coenzyme A to a Ser of acyl-carrier-protein. The polypeptide is Holo-[acyl-carrier-protein] synthase (Borrelia turicatae (strain 91E135)).